Here is a 548-residue protein sequence, read N- to C-terminus: Non-structural protein NS1 (548 aa).

It belongs to the orbivirus non-structural protein NS1 family.

This is Non-structural protein NS1 (Segment-5) from Camelus dromedarius (Dromedary).